We begin with the raw amino-acid sequence, 204 residues long: Holliday junction branch migration complex subunit RuvA (204 aa).

A domain I region spans residues 1 to 67; that stretch reads MIAFLSGHLV…ETELVLYGFG (67 aa). A domain II region spans residues 68–146; that stretch reads SPAERDVFVE…HWRQGLENAD (79 aa). The segment at 147–156 is flexible linker; it reads RPLAGGPPPA. A domain III region spans residues 156–204; sequence AIREEVEMALLALGYSLQEIQAALQALPSQPRPTEEWLRDAITYLSRQP.

Belongs to the RuvA family. As to quaternary structure, homotetramer. Forms an RuvA(8)-RuvB(12)-Holliday junction (HJ) complex. HJ DNA is sandwiched between 2 RuvA tetramers; dsDNA enters through RuvA and exits via RuvB. An RuvB hexamer assembles on each DNA strand where it exits the tetramer. Each RuvB hexamer is contacted by two RuvA subunits (via domain III) on 2 adjacent RuvB subunits; this complex drives branch migration. In the full resolvosome a probable DNA-RuvA(4)-RuvB(12)-RuvC(2) complex forms which resolves the HJ.

It localises to the cytoplasm. The RuvA-RuvB-RuvC complex processes Holliday junction (HJ) DNA during genetic recombination and DNA repair, while the RuvA-RuvB complex plays an important role in the rescue of blocked DNA replication forks via replication fork reversal (RFR). RuvA specifically binds to HJ cruciform DNA, conferring on it an open structure. The RuvB hexamer acts as an ATP-dependent pump, pulling dsDNA into and through the RuvAB complex. HJ branch migration allows RuvC to scan DNA until it finds its consensus sequence, where it cleaves and resolves the cruciform DNA. In Synechococcus sp. (strain JA-3-3Ab) (Cyanobacteria bacterium Yellowstone A-Prime), this protein is Holliday junction branch migration complex subunit RuvA.